The primary structure comprises 478 residues: Ribulose bisphosphate carboxylase large chain (478 aa).

Residues 1–2 (MS) constitute a propeptide that is removed on maturation. N-acetylproline is present on P3. K14 is subject to N6,N6,N6-trimethyllysine. 2 residues coordinate substrate: N123 and T173. The active-site Proton acceptor is the K175. Position 177 (K177) interacts with substrate. Positions 201, 203, and 204 each coordinate Mg(2+). K201 carries the N6-carboxylysine modification. H294 (proton acceptor) is an active-site residue. Substrate contacts are provided by R295, H327, and S379.

Belongs to the RuBisCO large chain family. Type I subfamily. Heterohexadecamer of 8 large chains and 8 small chains; disulfide-linked. The disulfide link is formed within the large subunit homodimers. Requires Mg(2+) as cofactor. In terms of processing, the disulfide bond which can form in the large chain dimeric partners within the hexadecamer appears to be associated with oxidative stress and protein turnover.

The protein resides in the plastid. Its subcellular location is the chloroplast. It catalyses the reaction 2 (2R)-3-phosphoglycerate + 2 H(+) = D-ribulose 1,5-bisphosphate + CO2 + H2O. The enzyme catalyses D-ribulose 1,5-bisphosphate + O2 = 2-phosphoglycolate + (2R)-3-phosphoglycerate + 2 H(+). Its function is as follows. RuBisCO catalyzes two reactions: the carboxylation of D-ribulose 1,5-bisphosphate, the primary event in carbon dioxide fixation, as well as the oxidative fragmentation of the pentose substrate in the photorespiration process. Both reactions occur simultaneously and in competition at the same active site. The chain is Ribulose bisphosphate carboxylase large chain from Drimys granadensis.